Here is an 85-residue protein sequence, read N- to C-terminus: Large ribosomal subunit protein bL27 (85 aa).

A compositionally biased stretch (gly residues) spans 1–10; it reads MAQKKGGGST. Residues 1 to 21 form a disordered region; that stretch reads MAQKKGGGSTRNGRDSQPKML.

It belongs to the bacterial ribosomal protein bL27 family.

In Leptothrix cholodnii (strain ATCC 51168 / LMG 8142 / SP-6) (Leptothrix discophora (strain SP-6)), this protein is Large ribosomal subunit protein bL27.